The sequence spans 188 residues: dCTP deaminase (188 aa).

Residues 111–116 (KSTYAR), 135–137 (TLE), Q156, Y170, K179, and Q180 contribute to the dCTP site. The Proton donor/acceptor role is filled by E137.

It belongs to the dCTP deaminase family. In terms of assembly, homotrimer.

The catalysed reaction is dCTP + H2O + H(+) = dUTP + NH4(+). Its pathway is pyrimidine metabolism; dUMP biosynthesis; dUMP from dCTP (dUTP route): step 1/2. Catalyzes the deamination of dCTP to dUTP. The protein is dCTP deaminase of Orientia tsutsugamushi (strain Boryong) (Rickettsia tsutsugamushi).